A 433-amino-acid chain; its full sequence is MRYMQDSSMPCQDASPPDVGAAPRRATRAVRVQWGGRTVTVGGNASVVVQSMTNTDTADAVATAIQVKELAQAGSEIVRITVNTPEAAREVAAIREQLDRMGVEVPLVGDFHYNGHKLLTQFPECAQALSKYRINPGNMGGGKRRDDNFAQMIEVACRHDKPVRIGVNWGSLDHELMARKMDENSRRAQPWEAQAVMRDALVVSAISNARRAEELGLRSDAIVLSCKVSHVQDLIAVYRDLSARCDYPLHLGLTEAGMGSKGIVASTAALAVLLQEGIGDTIRISLTPEPGGDRTREVIVAQEILQTMGLRAFTPMVVACPGCGRTSSTFFQELADSIQSFLRRQMPLWRTRYPGVESMNVAVMGCVVNGPGESRHADIGISLPGTGEVPAAPVFIDGERTVTLKGDHIAEEFQAIVEDYVARRYGAGITHQE.

The segment covering 1–10 has biased composition (polar residues); it reads MRYMQDSSMP. Positions 1-24 are disordered; that stretch reads MRYMQDSSMPCQDASPPDVGAAPR. The [4Fe-4S] cluster site is built by Cys320, Cys323, Cys366, and Glu373.

The protein belongs to the IspG family. The cofactor is [4Fe-4S] cluster.

It catalyses the reaction (2E)-4-hydroxy-3-methylbut-2-enyl diphosphate + oxidized [flavodoxin] + H2O + 2 H(+) = 2-C-methyl-D-erythritol 2,4-cyclic diphosphate + reduced [flavodoxin]. Its pathway is isoprenoid biosynthesis; isopentenyl diphosphate biosynthesis via DXP pathway; isopentenyl diphosphate from 1-deoxy-D-xylulose 5-phosphate: step 5/6. Functionally, converts 2C-methyl-D-erythritol 2,4-cyclodiphosphate (ME-2,4cPP) into 1-hydroxy-2-methyl-2-(E)-butenyl 4-diphosphate. This is 4-hydroxy-3-methylbut-2-en-1-yl diphosphate synthase (flavodoxin) from Bordetella bronchiseptica (strain ATCC BAA-588 / NCTC 13252 / RB50) (Alcaligenes bronchisepticus).